The primary structure comprises 59 residues: Conotoxin Cl14.4 (59 aa).

An N-terminal signal peptide occupies residues 1–19 (MKFLLFLSVALLLTSFIET). Residues 20–36 (VTVNKAGMERPSRALVG) constitute a propeptide that is removed on maturation. The residue at position 58 (Ile-58) is an Isoleucine amide.

Contains 2 disulfide bonds. As to expression, expressed by the venom duct.

Its subcellular location is the secreted. The protein is Conotoxin Cl14.4 of Californiconus californicus (California cone).